The chain runs to 505 residues: Kinesin light chain 3 (505 aa).

The interval 1–20 (MSVQVAAPGGLGLGLERPSP) is disordered. The stretch at 88–150 (LLALSAHVGA…EEEKSHLEFL (63 aa)) forms a coiled coil. Positions 157–193 (DPPAESQQPESPPRRDSLASLFPSEEEERRGPEAVGA) are disordered. Ser-173 is modified (phosphoserine). 5 TPR repeats span residues 207-240 (LRTL…LERS), 249-282 (ATML…REQT), 291-324 (AATL…REKV), 333-366 (AKQL…YEAL), and 375-408 (AKTK…EALP). The disordered stretch occupies residues 409-505 (APLGAPNTGT…STSTQDLGPR (97 aa)). Over residues 416–434 (TGTTSDTQQQTLSRSSSFS) the composition is skewed to low complexity. Residues 435 to 453 (KLRESIRRGSEKLVSRLRG) show a composition bias toward basic and acidic residues. Ser-467 carries the post-translational modification Phosphoserine. The segment covering 489–505 (SEASRTLSTSTQDLGPR) has biased composition (polar residues). Phosphothreonine is present on Thr-499.

The protein belongs to the kinesin light chain family. Oligomer composed of two heavy chains and two light chains. Associates with microtubulin in an ATP-dependent manner. Interacts with KIF5C. Interacts with ODF1. Interacts with LRGUK. Interacts with VDAC2.

It is found in the cytoplasm. The protein localises to the cytoskeleton. The protein resides in the mitochondrion. In terms of biological role, kinesin is a microtubule-associated force-producing protein that may play a role in organelle transport. Plays a role during spermiogenesis in the development of the sperm tail midpiece and in the normal function of spermatozoa. May play a role in the formation of the mitochondrial sheath formation in the developing spermatid midpiece. The chain is Kinesin light chain 3 (KLC3) from Bos taurus (Bovine).